Here is a 132-residue protein sequence, read N- to C-terminus: Small ribosomal subunit protein uS8 (132 aa).

This sequence belongs to the universal ribosomal protein uS8 family. In terms of assembly, part of the 30S ribosomal subunit. Contacts proteins S5 and S12.

Its function is as follows. One of the primary rRNA binding proteins, it binds directly to 16S rRNA central domain where it helps coordinate assembly of the platform of the 30S subunit. In Lysinibacillus sphaericus (strain C3-41), this protein is Small ribosomal subunit protein uS8.